The primary structure comprises 75 residues: Acylphosphatase-like protein MJ1405 (75 aa).

Positions 8-75 (TYEIIIYGRI…TNFWRVRKCK (68 aa)) constitute an Acylphosphatase-like domain.

This chain is Acylphosphatase-like protein MJ1405, found in Methanocaldococcus jannaschii (strain ATCC 43067 / DSM 2661 / JAL-1 / JCM 10045 / NBRC 100440) (Methanococcus jannaschii).